The chain runs to 205 residues: Ribosome maturation factor RimP (205 aa).

Over residues 1–13 (MSNAEATTSSDRT) the composition is skewed to polar residues. The tract at residues 1–27 (MSNAEATTSSDRTGTGKAEAESVHNPE) is disordered. Positions 18 to 27 (AEAESVHNPE) are enriched in basic and acidic residues.

Belongs to the RimP family.

Its subcellular location is the cytoplasm. Required for maturation of 30S ribosomal subunits. The protein is Ribosome maturation factor RimP of Arthrobacter sp. (strain FB24).